Here is a 179-residue protein sequence, read N- to C-terminus: Large ribosomal subunit protein uL16 (179 aa).

The segment at 147–179 (KASSASLANLDEDANSQTDDETSSSGSVATVES) is disordered. Acidic residues predominate over residues 156 to 168 (LDEDANSQTDDET). The span at 169–179 (SSSGSVATVES) shows a compositional bias: polar residues.

This sequence belongs to the universal ribosomal protein uL16 family. As to quaternary structure, part of the 50S ribosomal subunit.

Binds 23S rRNA and is also seen to make contacts with the A and possibly P site tRNAs. The protein is Large ribosomal subunit protein uL16 of Prochlorococcus marinus (strain MIT 9211).